The primary structure comprises 345 residues: Calcium uniporter regulatory subunit MCUb, mitochondrial (345 aa).

The N-terminal 44 residues, 1–44 (MPGALSGRRMLPSGLCLGRWQLLRTIRARGRGDPRELPSTPQVL), are a transit peptide targeting the mitochondrion. A coiled-coil region spans residues 188-221 (EIQKRRERHLMAKIDHLQEQLRPLEQVKAAIEAR). Transmembrane regions (helical) follow at residues 229 to 249 (LLWA…WLTW) and 259 to 279 (PVTF…FIIT). Residues 306–334 (FDVEQYNKLKEDLAEATESLESVRRSLRL) are a coiled coil.

It belongs to the MCU (TC 1.A.77) family. As to quaternary structure, homooligomer. Associates with the uniplex complex, composed of MCU, MICU1, MICU2 and EMRE/SMDT1, inhibiting its activity. In terms of tissue distribution, detected in lung, brain and heart, and at lower levels in white fat, skeletal muscle and spleen. Detected at very low levels in kidney and liver. Highly expressed in macrophages during the progression of skeletal muscle regeneration.

It is found in the mitochondrion inner membrane. In terms of biological role, negative regulator of the mitochondrial calcium uniporter (MCU), a channel that mediates calcium uptake into the mitochondrial matrix. MCUB is required to limit mitochondrial calcium overload during stress. Acts as a dominant-negative regulator that displaces MCU from the functional uniplex complex and thereby decreases the association of calcium sensors MICU1 and MICU2, preventing channel gating. Mitochondrial calcium homeostasis plays key roles in mitochondrial metabolism. Acts as an important regulator of mitochondrial metabolism in response to stress in muscle cells: induced in response to fasting, leading to restrict mitochondrial calcium uptake, resulting in reprogramming of mitochondria toward fatty acid oxidation preference. Acts as a regulator of macrophage polarization during skeletal muscle regeneration: inhibition of mitochondrial calcium uptake drives differentiation of macrophages with anti-inflammatory profile, promoting the differentiation and fusion of satellite cells. In Mus musculus (Mouse), this protein is Calcium uniporter regulatory subunit MCUb, mitochondrial.